The chain runs to 401 residues: Bifunctional D-cysteine desulfhydrase/1-aminocyclopropane-1-carboxylate deaminase, mitochondrial (401 aa).

A mitochondrion-targeting transit peptide spans 1 to 37; the sequence is MRGRSLTLSRVKLELARRSMSATSVPSMADFLTKKPY. The residue at position 2 (R2) is an N-acetylserine. K93 is modified (N6-(pyridoxal phosphate)lysine). S120 acts as the Nucleophile in catalysis.

It belongs to the ACC deaminase/D-cysteine desulfhydrase family. Pyridoxal 5'-phosphate is required as a cofactor. In terms of tissue distribution, highly expressed in stems and cauline leaves, and at lower levels in roots, rosette leaves and flowers.

It localises to the mitochondrion. It carries out the reaction D-cysteine + H2O = hydrogen sulfide + pyruvate + NH4(+) + H(+). The enzyme catalyses 1-aminocyclopropane-1-carboxylate + H2O = 2-oxobutanoate + NH4(+). Functionally, catalyzes the production of hydrogen sulfide (H2S) from cysteine. Is mainly responsible for the degradation of cysteine to generate H2S, a regulator of stomatal movement and closure. Has high affinity for D-cysteine. Possesses 1-aminocyclopropane-1-carboxylic acid (ACC) deaminase activity. Acts as a regulator of ACC levels and causes changes in ethylene levels. The protein is Bifunctional D-cysteine desulfhydrase/1-aminocyclopropane-1-carboxylate deaminase, mitochondrial (DCD) of Arabidopsis thaliana (Mouse-ear cress).